Here is a 132-residue protein sequence, read N- to C-terminus: Glycine-rich protein 3 (132 aa).

Positions 1-20 (MRYAVLLAVVLLLGAFTAEA) are cleaved as a signal peptide.

In terms of tissue distribution, prismatic layer of shell (at protein level). Expressed primarily in the mantle with highest level in the mantle edge and lower level in the mantle pallium.

The protein resides in the secreted. The chain is Glycine-rich protein 3 from Pinctada maxima (Silver-lipped pearl oyster).